The primary structure comprises 931 residues: Neuropilin-2 (931 aa).

Residues 1 to 20 (MDMFPLTWVFLALYFSGHEV) form the signal peptide. Over 21–864 (RSQQDPPCGG…EKSWLYTLDP (844 aa)) the chain is Extracellular. 3 cysteine pairs are disulfide-bonded: Cys28/Cys55, Cys83/Cys105, and Cys149/Cys175. 2 consecutive CUB domains span residues 28–142 (CGGR…YEIF) and 149–267 (CSKN…YYLI). 2 N-linked (GlcNAc...) asparagine glycosylation sites follow: Asn152 and Asn157. Glu197, Asp211, and Asp252 together coordinate Ca(2+). Cys208 and Cys230 are joined by a disulfide. 2 cysteine pairs are disulfide-bonded: Cys277/Cys427 and Cys434/Cys592. F5/8 type C domains lie at 277-427 (CNVP…LFGC) and 434-592 (CSNM…VLGC). A compositionally biased stretch (polar residues) spans 298–310 (TFSDGRWTPQQSR). The interval 298–317 (TFSDGRWTPQQSRLHGDDNG) is disordered. The segment at 601 to 621 (VETLGPTVKSEETTTPYPMDE) is disordered. Asn629 is a glycosylation site (N-linked (GlcNAc...) asparagine). An MAM domain is found at 642-802 (SGFNCNFDFP…TDVPLENCME (161 aa)). The tract at residues 819 to 854 (THGGEGYEDEIDDEYEGDWSNSSSSTSGAGDPSSGK) is disordered. Residues 824–835 (GYEDEIDDEYEG) are compositionally biased toward acidic residues. Over residues 836–851 (DWSNSSSSTSGAGDPS) the composition is skewed to low complexity. Asn839 carries N-linked (GlcNAc...) asparagine glycosylation. Residues 865–889 (ILITIIAMSSLGVLLGATCAGLLLY) form a helical membrane-spanning segment. Residues 890–931 (CTCSYSGLSSRSCTTLENYNFELYDGLKHKVKINHQKCCSEA) are Cytoplasmic-facing.

This sequence belongs to the neuropilin family. Heterodimer with NRP1. Binds PLXNB1. In terms of tissue distribution, expressed in developing CNS, PNS and in some nonneural tissues including limb buds, developing bones, muscles, intestinal epithelium, kidney, lung and submandibular gland.

It localises to the membrane. In terms of biological role, high affinity receptor for semaphorins 3C, 3F, VEGF-165 and VEGF-145 isoforms of VEGF, and the PLGF-2 isoform of PGF. The protein is Neuropilin-2 (Nrp2) of Mus musculus (Mouse).